The sequence spans 364 residues: mRNA decay activator protein ZFP36L2-B (364 aa).

Positions 102-111 (SFSENGERSQ) are enriched in basic and acidic residues. Residues 102-129 (SFSENGERSQHLLHLQQQQQQQKAGAQV) are disordered. Residues 113-123 (LLHLQQQQQQQ) are compositionally biased toward low complexity. Residues 133 to 138 (RYKTEL) carry the RNA-binding motif. 2 C3H1-type zinc fingers span residues 133–161 (RYKT…HGFH) and 171–199 (KYKT…HNAE). Residues 150-191 (YGEKCQFAHGFHELRSLTRHPKYKTELCRTFHTIGFCPYGPR) are RNA-binding. Residues 308–350 (SESPVFDAPPSPPDSLSDRDSYLSGSLSSGSLSGSDSPTLDSN) are disordered. Low complexity predominate over residues 329-348 (YLSGSLSSGSLSGSDSPTLD).

In terms of processing, phosphorylated. Remains unlocalized in the egg and early embryo. From stage 21 (late neurula), expressed around the pronephros in the anterior crests, pharyngeal arch, hindbrain, mesodermal tissues around the pronephros and tail-bud. This expression pattern is maintained up to the tadpole stage.

It localises to the nucleus. The protein resides in the cytoplasm. In terms of biological role, zinc-finger RNA-binding protein that destabilizes several cytoplasmic AU-rich element (ARE)-containing mRNA transcripts by promoting their poly(A) tail removal or deadenylation, and hence provide a mechanism for attenuating protein synthesis. Acts as a 3'-untranslated region (UTR) ARE mRNA-binding adapter protein to communicate signaling events to the mRNA decay machinery. Functions by recruiting the CCR4-NOT deadenylase complex and probably other components of the cytoplasmic RNA decay machinery to the bound ARE-containing mRNAs, and hence promotes ARE-mediated mRNA deadenylation and decay processes. Binds to 3'-UTR ARE of numerous mRNAs. Also induces the degradation of ARE-containing mRNAs even in absence of poly(A) tail. Required for tubulogenesis during pronephros development. The chain is mRNA decay activator protein ZFP36L2-B (zfp36l2-B) from Xenopus laevis (African clawed frog).